Here is a 212-residue protein sequence, read N- to C-terminus: Translation initiation factor IF-3 (212 aa).

A disordered region spans residues Met168–Ala212. Residues Pro176–Gly186 show a composition bias toward basic and acidic residues. The span at Ala194–Ala212 shows a compositional bias: low complexity.

This sequence belongs to the IF-3 family. As to quaternary structure, monomer.

The protein localises to the cytoplasm. Its function is as follows. IF-3 binds to the 30S ribosomal subunit and shifts the equilibrium between 70S ribosomes and their 50S and 30S subunits in favor of the free subunits, thus enhancing the availability of 30S subunits on which protein synthesis initiation begins. In Deinococcus radiodurans (strain ATCC 13939 / DSM 20539 / JCM 16871 / CCUG 27074 / LMG 4051 / NBRC 15346 / NCIMB 9279 / VKM B-1422 / R1), this protein is Translation initiation factor IF-3.